Reading from the N-terminus, the 285-residue chain is 1-acyl-sn-glycerol-3-phosphate acyltransferase alpha (285 aa).

The first 28 residues, 1–28 (MELWPGAWTALLLLLLLLLSTLWFCSSS), serve as a signal peptide directing secretion. At 29 to 34 (AKYFFK) the chain is on the lumenal side. Residues 35–55 (MAFYNGWILFLAILAIPVCAV) form a helical membrane-spanning segment. Residues 56-124 (RGRNVENMKI…PDRCVPIAKR (69 aa)) are Cytoplasmic-facing. An HXXXXD motif motif is present at residues 101–106 (HQSSLD). A helical transmembrane segment spans residues 125-145 (ELLWAGSAGLACWLAGIIFID). Residues 146–189 (RKRTGDAISVMSEVAQTLLTQDVRVWVFPEGTRNHNGSMLPFKR) lie on the Lumenal side of the membrane. Positions 175–178 (EGTR) match the EGTR motif motif.

The protein belongs to the 1-acyl-sn-glycerol-3-phosphate acyltransferase family. In terms of tissue distribution, widely expressed.

Its subcellular location is the endoplasmic reticulum membrane. It carries out the reaction a 1-acyl-sn-glycero-3-phosphate + an acyl-CoA = a 1,2-diacyl-sn-glycero-3-phosphate + CoA. The catalysed reaction is 1-(9Z-octadecenoyl)-sn-glycero-3-phosphate + (9Z)-octadecenoyl-CoA = 1,2-di-(9Z-octadecenoyl)-sn-glycero-3-phosphate + CoA. It catalyses the reaction 1-(9Z-octadecenoyl)-sn-glycero-3-phosphate + hexadecanoyl-CoA = 1-(9Z)-octadecenoyl-2-hexadecanoyl-sn-glycero-3-phosphate + CoA. The enzyme catalyses heptadecanoyl-CoA + 1-(9Z-octadecenoyl)-sn-glycero-3-phosphate = 1-(9Z)-octadecenoyl-2-heptadecanoyl-sn-glycero-3-phosphate + CoA. It carries out the reaction 1-(9Z-octadecenoyl)-sn-glycero-3-phosphate + octadecanoyl-CoA = 1-(9Z-octadecenoyl)-2-octadecanoyl-sn-glycero-3-phosphate + CoA. The catalysed reaction is 1-(9Z-octadecenoyl)-sn-glycero-3-phosphate + (9Z,12Z)-octadecadienoyl-CoA = 1-(9Z)-octadecenoyl-2-(9Z,12Z)-octadecadienoyl-sn-glycero-3-phosphate + CoA. It catalyses the reaction 1-(9Z-octadecenoyl)-sn-glycero-3-phosphate + tetradecanoyl-CoA = 1-(9Z)-octadecenoyl-2-tetradecanoyl-sn-glycero-3-phosphate + CoA. The enzyme catalyses pentadecanoyl-CoA + 1-(9Z-octadecenoyl)-sn-glycero-3-phosphate = 1-(9Z)-octadecenoyl-2-pentadecanoyl-sn-glycero-3-phosphate + CoA. It carries out the reaction 1-hexadecanoyl-sn-glycero-3-phosphate + (9Z)-octadecenoyl-CoA = 1-hexadecanoyl-2-(9Z-octadecenoyl)-sn-glycero-3-phosphate + CoA. The catalysed reaction is 1-(9Z,12Z,15Z)-octadecatrienoyl-sn-glycero-3-phosphate + (9Z)-octadecenoyl-CoA = 1-(9Z,12Z,15Z)-octadecatrienoyl-2-(9Z)-octadecenoyl-sn-glycero-3-phosphate + CoA. It catalyses the reaction 1-(6Z,9Z,12Z-octadecatrienoyl)-sn-glycero-3-phosphate + (9Z)-octadecenoyl-CoA = (6Z,9Z,12Z)-octadecatrienoyl-2-(9Z)-octadecenoyl-sn-glycero-3-phosphate + CoA. The enzyme catalyses 1-eicosanoyl-sn-glycero-3-phosphate + (9Z)-octadecenoyl-CoA = 1-eicosanoyl-2-(9Z)-octadecenoyl-sn-glycero-3-phosphate + CoA. It carries out the reaction 1-tetradecanoyl-sn-glycerol 3-phosphate + (9Z)-octadecenoyl-CoA = 1-tetradecanoyl-2-(9Z)-octadecenoyl-sn-glycero-3-phosphate + CoA. The catalysed reaction is 1-(9Z-octadecenoyl)-sn-glycero-3-phosphate + (5Z,8Z,11Z,14Z)-eicosatetraenoyl-CoA = 1-(9Z)-octadecenoyl-2-(5Z,8Z,11Z,14Z)-eicosatetraenoyl-sn-glycero-3-phosphate + CoA. It catalyses the reaction 1-(9Z-octadecenoyl)-sn-glycero-3-phosphate + dodecanoyl-CoA = 1-(9Z)-octadecenoyl-2-dodecanoyl-sn-glycero-3-phosphate + CoA. The enzyme catalyses (6Z)-octadecenoyl-CoA + 1-(9Z-octadecenoyl)-sn-glycero-3-phosphate = 1-(9Z)-octadecenoyl-2-(6Z)-octadecenoyl-sn-glycero-3-phosphate + CoA. It carries out the reaction (11Z)-octadecenoyl-CoA + 1-(9Z-octadecenoyl)-sn-glycero-3-phosphate = 1-(9Z)-octadecenoyl-2-(11Z)-octadecenoyl-sn-glycero-3-phosphate + CoA. The catalysed reaction is (9Z)-hexadecenoyl-CoA + 1-(9Z-octadecenoyl)-sn-glycero-3-phosphate = 1-(9Z-octadecenoyl)-2-(9Z-hexadecenoyl)-sn-glycero-3-phosphate + CoA. The protein operates within phospholipid metabolism; CDP-diacylglycerol biosynthesis; CDP-diacylglycerol from sn-glycerol 3-phosphate: step 2/3. Its function is as follows. Converts 1-acyl-sn-glycerol-3-phosphate (lysophosphatidic acid or LPA) into 1,2-diacyl-sn-glycerol-3-phosphate (phosphatidic acid or PA) by incorporating an acyl moiety at the sn-2 position of the glycerol backbone. This chain is 1-acyl-sn-glycerol-3-phosphate acyltransferase alpha (Agpat1), found in Mus musculus (Mouse).